Reading from the N-terminus, the 139-residue chain is Large-conductance mechanosensitive channel (139 aa).

2 consecutive transmembrane segments (helical) span residues Val14 to Leu34 and Gly86 to Ile106.

This sequence belongs to the MscL family. In terms of assembly, homopentamer.

The protein resides in the cell inner membrane. Its function is as follows. Channel that opens in response to stretch forces in the membrane lipid bilayer. May participate in the regulation of osmotic pressure changes within the cell. This chain is Large-conductance mechanosensitive channel, found in Methylobacillus flagellatus (strain ATCC 51484 / DSM 6875 / VKM B-1610 / KT).